A 375-amino-acid chain; its full sequence is MAAIKYRLIKKDSRTNARLGILETPHGVIETPVFMPVGTQATVKAMTPEELKEIGATIILSNTYHLYLRPGHKIIEKAGGLHRFMNWDRAILTDSGGFQIFSLSSLRKIKEEGVEFRSHIDGSKHFFTPEKVIEIQNALGSDIIMSFDECAPYPADYEYVKNSMELTIKWAERGKKAHKNTEKQALFGIVQGGIYEDLRKECAQRLVEMDFPGYSIGGLSVGEPKNVMYDIVDLTTEYLPENKPRYLMGVGSPDDLIEGVIRGVDMFDCVLPTRIARNGTVFTSKGKLIVRDAPYAEDFSPLDEECDCYTCKNYSRAYIRHLFKANEILAARLATIHNLYFLIKLMERIREAIRQDRLLEFKKQFFKKYGYKEEY.

Asp94 (proton acceptor) is an active-site residue. Substrate contacts are provided by residues 94–98, Asp148, Gln191, and Gly218; that span reads DSGGF. The interval 249–255 is RNA binding; sequence GVGSPDD. Asp268 serves as the catalytic Nucleophile. The interval 273-277 is RNA binding; important for wobble base 34 recognition; the sequence is TRIAR. Residues Cys306, Cys308, Cys311, and His337 each contribute to the Zn(2+) site.

Belongs to the queuine tRNA-ribosyltransferase family. As to quaternary structure, homodimer. Within each dimer, one monomer is responsible for RNA recognition and catalysis, while the other monomer binds to the replacement base PreQ1. The cofactor is Zn(2+).

The catalysed reaction is 7-aminomethyl-7-carbaguanine + guanosine(34) in tRNA = 7-aminomethyl-7-carbaguanosine(34) in tRNA + guanine. It participates in tRNA modification; tRNA-queuosine biosynthesis. Catalyzes the base-exchange of a guanine (G) residue with the queuine precursor 7-aminomethyl-7-deazaguanine (PreQ1) at position 34 (anticodon wobble position) in tRNAs with GU(N) anticodons (tRNA-Asp, -Asn, -His and -Tyr). Catalysis occurs through a double-displacement mechanism. The nucleophile active site attacks the C1' of nucleotide 34 to detach the guanine base from the RNA, forming a covalent enzyme-RNA intermediate. The proton acceptor active site deprotonates the incoming PreQ1, allowing a nucleophilic attack on the C1' of the ribose to form the product. After dissociation, two additional enzymatic reactions on the tRNA convert PreQ1 to queuine (Q), resulting in the hypermodified nucleoside queuosine (7-(((4,5-cis-dihydroxy-2-cyclopenten-1-yl)amino)methyl)-7-deazaguanosine). In Thermoanaerobacter sp. (strain X514), this protein is Queuine tRNA-ribosyltransferase.